We begin with the raw amino-acid sequence, 854 residues long: Arsenate respiratory reductase molybdopterin-containing subunit ArrA (854 aa).

A signal peptide (tat-type signal) is located at residues Met-1–Ala-41. Residues Gly-54–Asp-110 form the 4Fe-4S Mo/W bis-MGD-type domain. [4Fe-4S] cluster contacts are provided by Cys-61, Cys-64, Cys-68, and Cys-96. Arg-165 provides a ligand contact to arsenite. Tyr-166 serves as a coordination point for arsenate. Residue His-189 coordinates arsenite. Ser-190 is a binding site for arsenate. Cys-193 is a binding site for Mo-bis(molybdopterin guanine dinucleotide). Arsenate is bound at residue Lys-198. Residue Tyr-210 coordinates arsenite.

It belongs to the prokaryotic molybdopterin-containing oxidoreductase family. In terms of assembly, heterodimer composed of one large subunit (ArrA) and one small subunit (ArrB). Requires [4Fe-4S] cluster as cofactor. Mo-bis(molybdopterin guanine dinucleotide) is required as a cofactor. Post-translationally, predicted to be exported by the Tat system. The position of the signal peptide cleavage has not been experimentally proven.

It localises to the periplasm. It carries out the reaction arsenite + A + H2O = arsenate + AH2 + H(+). Phosphate is a competitive inhibitor. Its function is as follows. Component of the arsenate respiratory reductase (Arr) complex, which catalyzes the reduction of arsenate (As(V)) to arsenite (As(III)). ArrA is the arsenate-binding subunit. The periplasmic localization of this complex may allow the cell to couple arsenate reduction to energy production before arsenate can be transported to the cell cytoplasm and enter the ars detoxification pathway, an energy-requiring process. The sequence is that of Arsenate respiratory reductase molybdopterin-containing subunit ArrA from Shewanella sp. (strain ANA-3).